We begin with the raw amino-acid sequence, 502 residues long: Cytochrome P450 71B10 (502 aa).

A helical transmembrane segment spans residues 1–21; that stretch reads MTVLWFVSLILLISILLVAVK. Cys443 is a binding site for heme.

It belongs to the cytochrome P450 family. Requires heme as cofactor.

It localises to the membrane. The sequence is that of Cytochrome P450 71B10 (CYP71B10) from Arabidopsis thaliana (Mouse-ear cress).